Here is a 260-residue protein sequence, read N- to C-terminus: tRNA pseudouridine synthase C (260 aa).

D54 is an active-site residue.

Belongs to the pseudouridine synthase RluA family.

The catalysed reaction is uridine(65) in tRNA = pseudouridine(65) in tRNA. In terms of biological role, responsible for synthesis of pseudouridine from uracil-65 in transfer RNAs. The protein is tRNA pseudouridine synthase C (truC) of Escherichia coli (strain K12).